Consider the following 129-residue polypeptide: 3-aminoacrylate deaminase RutC (129 aa).

The protein belongs to the RutC family.

The enzyme catalyses (Z)-3-aminoacrylate + H2O + H(+) = 3-oxopropanoate + NH4(+). Functionally, involved in pyrimidine catabolism. Catalyzes the deamination of 3-aminoacrylate to malonic semialdehyde, a reaction that can also occur spontaneously. RutC may facilitate the reaction and modulate the metabolic fitness, rather than catalyzing essential functions. This chain is 3-aminoacrylate deaminase RutC, found in Caulobacter segnis (strain ATCC 21756 / DSM 7131 / JCM 7823 / NBRC 15250 / LMG 17158 / TK0059) (Mycoplana segnis).